The following is a 329-amino-acid chain: L-carnitine dehydrogenase (329 aa).

NAD(+) is bound at residue 19-24; the sequence is GAGVIG.

It belongs to the 3-hydroxyacyl-CoA dehydrogenase family. L-carnitine dehydrogenase subfamily. Homodimer.

It localises to the cytoplasm. The catalysed reaction is carnitine + NAD(+) = 3-dehydrocarnitine + NADH + H(+). It participates in amine and polyamine metabolism; carnitine metabolism. Catalyzes the NAD(+)-dependent oxidation of L-carnitine to 3-dehydrocarnitine. This chain is L-carnitine dehydrogenase, found in Nocardiopsis dassonvillei (strain ATCC 23218 / DSM 43111 / CIP 107115 / JCM 7437 / KCTC 9190 / NBRC 14626 / NCTC 10488 / NRRL B-5397 / IMRU 509) (Actinomadura dassonvillei).